A 269-amino-acid polypeptide reads, in one-letter code: MSRFDTLFANLKAKNEGAFVPFVTLCDPDFDRSFEIIETLIANGADALELGFPFSDPLLDGSVIQAANKRALDGGYSTDACFEMIAKIRSKYPEIPIGLLLCANLVFVPTQDVFFKRCAETGVDAVLIADVPVLAAEEFTQAAKKHGIQSVFICPPNADQATIERIARLTEGYTYLVSRAGVTSAENQAHAKNLDNLIESLKRSNSAPILQGFGIAKPEQVKEALALGCDGAISGSAIVKIIERNLDSQTQLLSELAKFVSVMKTATKS.

Active-site proton acceptor residues include E49 and D60.

This sequence belongs to the TrpA family. As to quaternary structure, tetramer of two alpha and two beta chains.

It catalyses the reaction (1S,2R)-1-C-(indol-3-yl)glycerol 3-phosphate + L-serine = D-glyceraldehyde 3-phosphate + L-tryptophan + H2O. It functions in the pathway amino-acid biosynthesis; L-tryptophan biosynthesis; L-tryptophan from chorismate: step 5/5. Functionally, the alpha subunit is responsible for the aldol cleavage of indoleglycerol phosphate to indole and glyceraldehyde 3-phosphate. The chain is Tryptophan synthase alpha chain from Actinobacillus pleuropneumoniae serotype 3 (strain JL03).